A 425-amino-acid polypeptide reads, in one-letter code: tRNA(Met) cytidine acetate ligase (425 aa).

ATP-binding positions include 7 to 20 (IVEY…HLYH), glycine 102, asparagine 165, and 190 to 191 (RI).

The protein belongs to the TmcAL family.

It localises to the cytoplasm. It carries out the reaction cytidine(34) in elongator tRNA(Met) + acetate + ATP = N(4)-acetylcytidine(34) in elongator tRNA(Met) + AMP + diphosphate. Functionally, catalyzes the formation of N(4)-acetylcytidine (ac(4)C) at the wobble position of elongator tRNA(Met), using acetate and ATP as substrates. First activates an acetate ion to form acetyladenylate (Ac-AMP) and then transfers the acetyl group to tRNA to form ac(4)C34. In Thermosipho melanesiensis (strain DSM 12029 / CIP 104789 / BI429), this protein is tRNA(Met) cytidine acetate ligase.